The following is a 299-amino-acid chain: Prohibitin-2 (299 aa).

Position 2 is an N-acetylalanine (Ala-2). A necessary for transcriptional repression region spans residues 19 to 49; sequence MGTALKLLLGAGAVAYGVRESVFTVEGGHRA. The residue at position 128 (Tyr-128) is a Phosphotyrosine. Residue Lys-147 is modified to N6-acetyllysine. The tract at residues 150 to 174 is necessary for transcriptional repression; that stretch reads ASQLITQRAQVSLLIRRELTERAKD. Ser-151 is modified (phosphoserine). Residues 190 to 238 adopt a coiled-coil conformation; sequence SREYTAAVEAKQVAQQEAQRAQFLVEKAKQEQRQKIVQAEGEAEAAKML. Lys-200, Lys-236, Lys-250, and Lys-262 each carry N6-acetyllysine.

This sequence belongs to the prohibitin family. As to quaternary structure, the mitochondrial prohibitin complex consists of two subunits (PHB1 and PHB2), assembled into a membrane-associated ring-shaped supercomplex of approximately 1 mDa. Interacts with ESR1, HDAC1 and HDAC5. Interacts with ZNF703. Interacts with STOML2. Interacts with ARFGEF3. Interacts with SPHK2. Interacts with COX4I1; the interaction associates PHB2 with COX. Interacts with MAP1LC3B (membrane-bound form LC3-II); the interaction is direct and upon mitochondrial depolarization and proteasome-dependent outer membrane rupture. Interacts with IGFBP6 (via C-terminal domain). Interacts with CLPB. Interacts with CD86 (via cytoplasmic domain); the interactions increases after priming with CD40. Interacts with AFG3L2. Interacts with DNAJC19. Interacts with AKT2; this interaction may be important for myogenic differentiation. In terms of processing, phosphorylated. Tyrosine phosphorylation is indirectly stimulated by IGFBP6. In terms of tissue distribution, widely expressed in different tissues.

It is found in the mitochondrion inner membrane. It localises to the cytoplasm. The protein localises to the nucleus. The protein resides in the cell membrane. Functionally, protein with pleiotropic attributes mediated in a cell-compartment- and tissue-specific manner, which include the plasma membrane-associated cell signaling functions, mitochondrial chaperone, and transcriptional co-regulator of transcription factors and sex steroid hormones in the nucleus. Its function is as follows. In the mitochondria, together with PHB, forms large ring complexes (prohibitin complexes) in the inner mitochondrial membrane (IMM) and functions as a chaperone protein that stabilizes mitochondrial respiratory enzymes and maintains mitochondrial integrity in the IMM, which is required for mitochondrial morphogenesis, neuronal survival, and normal lifespan. The prohibitin complex, with DNAJC19, regulates cardiolipin remodeling and the protein turnover of OMA1 in a cardiolipin-binding manner. Also regulates cytochrome-c oxidase assembly (COX) and mitochondrial respiration. Binding to sphingoid 1-phosphate (SPP) modulates its regulator activity. Has a key role of mitophagy receptor involved in targeting mitochondria for autophagic degradation. Involved in mitochondrial-mediated antiviral innate immunity, activates RIG-I-mediated signal transduction and production of IFNB1 and pro-inflammatory cytokine IL6. In terms of biological role, in the nucleus, serves as transcriptional co-regulator. Acts as a mediator of transcriptional repression by nuclear hormone receptors via recruitment of histone deacetylases. Functions as an estrogen receptor (ER)-selective coregulator that potentiates the inhibitory activities of antiestrogens and represses the activity of estrogens. Competes with NCOA1 for modulation of ER transcriptional activity. In the plasma membrane, is involved in IGFBP6-induced cell migration. Cooperates with CD86 to mediate CD86-signaling in B lymphocytes that regulates the level of IgG1 produced through the activation of distal signaling intermediates. Upon CD40 engagement, required to activate NF-kappa-B signaling pathway via phospholipase C and protein kinase C activation. The sequence is that of Prohibitin-2 from Mus musculus (Mouse).